Consider the following 105-residue polypeptide: Small ribosomal subunit protein eS26 (105 aa).

It belongs to the eukaryotic ribosomal protein eS26 family. As to quaternary structure, component of the small ribosomal subunit.

The protein resides in the cytoplasm. This chain is Small ribosomal subunit protein eS26 (RPS26), found in Encephalitozoon cuniculi (strain GB-M1) (Microsporidian parasite).